The chain runs to 1042 residues: Exosome RNA helicase MTR4 (1042 aa).

Residue Ala2 is modified to N-acetylalanine. The tract at residues 16 to 74 is disordered; the sequence is DSTTAAGTKKDKEKDKGKWKGPPGSADKAGKRFDGKLQSESTNNGKNKRDVDFEGTDEP. Residues 23-33 are compositionally biased toward basic and acidic residues; it reads TKKDKEKDKGK. Lys24 is covalently cross-linked (Glycyl lysine isopeptide (Lys-Gly) (interchain with G-Cter in SUMO2)). Ser40 bears the Phosphoserine mark. A compositionally biased stretch (basic and acidic residues) spans 43 to 52; that stretch reads KAGKRFDGKL. Lys51 and Lys78 each carry N6-acetyllysine. ATP contacts are provided by residues Ile139, 161 to 168, Ser164, Gly166, Lys167, and Thr168; that span reads AHTSAGKT. The 157-residue stretch at 148 to 304 folds into the Helicase ATP-binding domain; sequence IQCVDNNQSV…WICHLHKQPC (157 aa). Residues 252 to 255 carry the DEIH box motif; the sequence is DEIH. A Glycyl lysine isopeptide (Lys-Gly) (interchain with G-Cter in SUMO2) cross-link involves residue Lys358. Positions 405–577 constitute a Helicase C-terminal domain; the sequence is QMTKLDFNTD…NMVLNLLRVE (173 aa). Glycyl lysine isopeptide (Lys-Gly) (interchain with G-Cter in SUMO2) cross-links involve residues Lys684 and Lys723.

Belongs to the helicase family. SKI2 subfamily. Component of a TRAMP-like complex, an ATP-dependent exosome regulatory complex consisting of a helicase (MTREX), an oligadenylate polymerase (TENT4B or TENT4A), and a substrate specific RNA-binding factor (ZCCHC7 or ZCCHC8). Several TRAMP-like complexes exist with specific compositions and are associated with nuclear, or nucleolar RNA exosomes. Identified in the spliceosome C complex. Component of the poly(A) tail exosome targeting (PAXT) complex made of PABPN1, ZFC3H1 and MTREX that directs a subset of long and polyadenylated poly(A) RNAs for exosomal degradation. Component of the nuclear exosome targeting (NEXT) complex composed of MTREX, ZCCHC8, and RBM7 that directs a subset of non-coding short-lived RNAs for exosomal degradation. Interacts with ZCCHC8; this interaction bridges the interaction between RBM7 and MTREX. Binds to ZFC3H1 and RBM7 in a RNase-insensitive manner. Interacts with EXOSC10; the interaction mediates the association of MTREX with nuclear RNA exosomes. Interacts with isoform 1 of NVL in an ATP-dependent manner; the interaction is required to associate NVL with nuclear RNA exosome. Interacts with WDR74; the interaction dissociation in a late stage of rRNA synthesis is required for appropriate maturation of pre-60S particles and depends on the ATPase activity of NVL. Interacts with MPHOSPH6. Interacts with the RNA cap-binding complex proteins NCBP1 and SRRT. Interacts with NRDE2; the interaction is direct and negatively regulates MTREX function in exosomal degradation by changing its conformation precluding interaction with ZFC3H1, the RNA cap-binding complex proteins NCBP1 and SRRT, and association with the exosome. Associates with the RNA exosome complex.

The protein localises to the nucleus. It is found in the nucleoplasm. The protein resides in the nucleolus. Its subcellular location is the nucleus speckle. The enzyme catalyses ATP + H2O = ADP + phosphate + H(+). Activated when MTREX is incorporated into NEXT complex an the nuclear RNA exosome complex. Its function is as follows. Catalyzes the ATP-dependent unwinding of RNA duplexes with a single-stranded 3' RNA extension. Central subunit of many protein complexes, namely TRAMP-like, nuclear exosome targeting (NEXT) and poly(A) tail exosome targeting (PAXT). NEXT functions as an RNA exosome cofactor that directs a subset of non-coding short-lived RNAs for exosomal degradation. NEXT is involved in surveillance and turnover of aberrant transcripts and non-coding RNAs. PAXT directs a subset of long and polyadenylated poly(A) RNAs for exosomal degradation. The RNA exosome is fundamental for the degradation of RNA in eukaryotic nuclei. Substrate targeting is facilitated by its cofactor ZCCHC8, which links to RNA-binding protein adapters. Associated with the RNA exosome complex and involved in the 3'-processing of the 7S pre-RNA to the mature 5.8S rRNA. May be involved in pre-mRNA splicing. In the context of NEXT complex can also in vitro unwind DNA:RNA heteroduplexes with a 3' poly (A) RNA tracking strand. Can promote unwinding and degradation of structured RNA substrates when associated with the nuclear exosome and its cofactors. Can displace a DNA strand while translocating on RNA to ultimately degrade the RNA within a DNA/RNA heteroduplex. Plays a role in DNA damage response. The protein is Exosome RNA helicase MTR4 of Homo sapiens (Human).